The sequence spans 1091 residues: Methionine S-methyltransferase (1091 aa).

It belongs to the class I-like SAM-binding methyltransferase superfamily. In terms of assembly, homotetramer.

The protein localises to the cytoplasm. It catalyses the reaction L-methionine + S-adenosyl-L-methionine = S-methyl-L-methionine + S-adenosyl-L-homocysteine. Catalyzes the S-methylmethionine (SMM) biosynthesis from adenosyl-L-homocysteine (AdoMet) and methionine. SMM biosynthesis (by MMT1) and degradation (by HMT-1, HMT-2 and HMT-3) constitute the SMM cycle in plants, which is probably required to achieve short term control of AdoMet level. Also able to catalyze the selenium-methylmethionine (SeMM) from AdoMet and selenium-methionine (SeMet). May play a role in phoem sulfur transport; such function is however not essential. The sequence is that of Methionine S-methyltransferase (MMT1) from Zea mays (Maize).